A 154-amino-acid polypeptide reads, in one-letter code: AP-1 complex subunit sigma-3 (154 aa).

This sequence belongs to the adaptor complexes small subunit family. In terms of assembly, adaptor protein complex 1 (AP-1) is a heterotetramer composed of two large adaptins (gamma-type subunit AP1G1 and beta-type subunit AP1B1), a medium adaptin (mu-type subunit AP1M1 or AP1M2) and a small adaptin (sigma-type subunit AP1S1 or AP1S2 or AP1S3).

The protein localises to the golgi apparatus. Its subcellular location is the cytoplasmic vesicle membrane. It is found in the membrane. The protein resides in the clathrin-coated pit. Functionally, subunit of clathrin-associated adaptor protein complex 1 that plays a role in protein sorting in the late-Golgi/trans-Golgi network (TGN) and/or endosomes. The AP complexes mediate both the recruitment of clathrin to membranes and the recognition of sorting signals within the cytosolic tails of transmembrane cargo molecules. Involved in TLR3 trafficking. In Mus musculus (Mouse), this protein is AP-1 complex subunit sigma-3 (Ap1s3).